A 339-amino-acid polypeptide reads, in one-letter code: MRVYYDRDADVNLIKSKKVVIVGYGSQGRAHALNLKDSGAANVRVALREGSATVQKAQADGFEVMNVADAAKWADLMMMATPDELQADIYRDHIHNNLRDGAAIAFAHGLNVHCGLIEPKKTVDVMMIAPKGPGHTVRGEYQKGGGVPCLIAIHQDASGNAHDLALSYASGVGGGRSGVIETTFKEECETDLFGEQAVLCGGVVELIRTGFEVLVEAGYAPEMAYFECLNEMKLIVDLIYEGGIANMNYSISNTAEWGEYVTGPRIITAETKAEMKRVLKDIQTGKFTSDWMQEWKAGAARFKGIRRLNDAHQIEEVGGKLRAMMPWIEKNKLVDKARN.

The 182-residue stretch at 1–182 (MRVYYDRDAD…GGGRSGVIET (182 aa)) folds into the KARI N-terminal Rossmann domain. NADP(+) contacts are provided by residues 24 to 27 (YGSQ), arginine 48, serine 51, threonine 53, and 83 to 86 (DELQ). Residue histidine 108 is part of the active site. Residue glycine 134 coordinates NADP(+). The KARI C-terminal knotted domain occupies 183-328 (TFKEECETDL…GKLRAMMPWI (146 aa)). Positions 191, 195, 227, and 231 each coordinate Mg(2+). A substrate-binding site is contributed by serine 252.

It belongs to the ketol-acid reductoisomerase family. It depends on Mg(2+) as a cofactor.

It catalyses the reaction (2R)-2,3-dihydroxy-3-methylbutanoate + NADP(+) = (2S)-2-acetolactate + NADPH + H(+). The catalysed reaction is (2R,3R)-2,3-dihydroxy-3-methylpentanoate + NADP(+) = (S)-2-ethyl-2-hydroxy-3-oxobutanoate + NADPH + H(+). The protein operates within amino-acid biosynthesis; L-isoleucine biosynthesis; L-isoleucine from 2-oxobutanoate: step 2/4. It functions in the pathway amino-acid biosynthesis; L-valine biosynthesis; L-valine from pyruvate: step 2/4. In terms of biological role, involved in the biosynthesis of branched-chain amino acids (BCAA). Catalyzes an alkyl-migration followed by a ketol-acid reduction of (S)-2-acetolactate (S2AL) to yield (R)-2,3-dihydroxy-isovalerate. In the isomerase reaction, S2AL is rearranged via a Mg-dependent methyl migration to produce 3-hydroxy-3-methyl-2-ketobutyrate (HMKB). In the reductase reaction, this 2-ketoacid undergoes a metal-dependent reduction by NADPH to yield (R)-2,3-dihydroxy-isovalerate. The protein is Ketol-acid reductoisomerase (NADP(+)) of Brucella melitensis biotype 2 (strain ATCC 23457).